The following is a 98-amino-acid chain: UPF0175 protein VNG_0066H (98 aa).

Belongs to the UPF0175 family.

This is UPF0175 protein VNG_0066H from Halobacterium salinarum (strain ATCC 700922 / JCM 11081 / NRC-1) (Halobacterium halobium).